A 259-amino-acid polypeptide reads, in one-letter code: Ribosome maturation factor RimP (259 aa).

Residues 198-259 form a disordered region; it reads SLGLAPEPPP…RGEIDTSEGD (62 aa). A compositionally biased stretch (basic and acidic residues) spans 243 to 253; the sequence is LAADKARRGEI.

The protein belongs to the RimP family.

The protein resides in the cytoplasm. Required for maturation of 30S ribosomal subunits. This is Ribosome maturation factor RimP from Rhodopseudomonas palustris (strain TIE-1).